The following is a 623-amino-acid chain: DNA-directed RNA polymerase subunit beta' (623 aa).

4 residues coordinate Zn(2+): Cys70, Cys72, Cys85, and Cys88. Residues Asp466, Asp468, and Asp470 each contribute to the Mg(2+) site.

The protein belongs to the RNA polymerase beta' chain family. RpoC1 subfamily. In plastids the minimal PEP RNA polymerase catalytic core is composed of four subunits: alpha, beta, beta', and beta''. When a (nuclear-encoded) sigma factor is associated with the core the holoenzyme is formed, which can initiate transcription. Requires Mg(2+) as cofactor. The cofactor is Zn(2+).

It localises to the plastid. Its subcellular location is the chloroplast. It carries out the reaction RNA(n) + a ribonucleoside 5'-triphosphate = RNA(n+1) + diphosphate. Its function is as follows. DNA-dependent RNA polymerase catalyzes the transcription of DNA into RNA using the four ribonucleoside triphosphates as substrates. This is DNA-directed RNA polymerase subunit beta' from Guillardia theta (Cryptophyte).